A 648-amino-acid chain; its full sequence is MSLKWSACWVALGQLLCSCALALKGGMLFPKESPSRELKALDGLWHFRADLSNNRLQGFEQQWYRQPLRESGPVLDMPVPSSFNDITQEAALRDFIGWVWYEREAILPRRWTQDTDMRVVLRINSAHYYAVVWVNGIHVVEHEGGHLPFEADISKLVQSGPLTTCRITIAINNTLTPHTLPPGTIVYKTDTSMYPKGYFVQDTSFDFFNYAGLHRSVVLYTTPTTYIDDITVITNVEQDIGLVTYWISVQGSEHFQLEVQLLDEGGKVVAHGTGNQGQLQVPSANLWWPYLMHEHPAYMYSLEVKVTTTESVTDYYTLPIGIRTVAVTKSKFLINGKPFYFQGVNKHEDSDIRGKGFDWPLLVKDFNLLRWLGANSFRTSHYPYSEEVLQLCDRYGIVVIDECPGVGIVLPQSFGNESLRHHLEVMEELVRRDKNHPAVVMWSVANEPSSALKPAAYYFKTLITHTKALDLTRPVTFVSNAKYDADLGAPYVDVICVNSYFSWYHDYGHLEVIQPQLNSQFENWYKTHQKPIIQSEYGADAIPGIHEDPPRMFSEEYQKAVLENYHSVLDQKRKEYVVGELIWNFADFMTNQSPLRVIGNKKGIFTRQRQPKTSAFILRERYWRIANETGGHGSGPRTQCFGSRPFTF.

The N-terminal stretch at 1–22 is a signal peptide; sequence MSLKWSACWVALGQLLCSCALA. 2 N-linked (GlcNAc...) asparagine glycosylation sites follow: asparagine 172 and asparagine 416. Catalysis depends on glutamate 447, which acts as the Proton donor. Asparagine 627 carries an N-linked (GlcNAc...) asparagine glycan.

This sequence belongs to the glycosyl hydrolase 2 family. As to quaternary structure, homotetramer.

The protein localises to the lysosome. It localises to the endoplasmic reticulum. It catalyses the reaction a beta-D-glucuronoside + H2O = D-glucuronate + an alcohol. Inhibited by L-aspartic acid. Its function is as follows. Plays an important role in the degradation of dermatan and keratan sulfates. In Mus musculus (Mouse), this protein is Beta-glucuronidase (Gusb).